The sequence spans 870 residues: Lon protease (870 aa).

Residues 1–270 (MPTNSYRFLV…KLYEHIHTFA (270 aa)) form the Lon N-terminal domain. 454–461 (GPPGTGKT) lines the ATP pocket. Residues 691–870 (SPQIGTVTGL…YQQIYDFIFK (180 aa)) enclose the Lon proteolytic domain. Active-site residues include serine 777 and lysine 820.

It belongs to the peptidase S16 family. Homohexamer. Organized in a ring with a central cavity.

The protein localises to the cytoplasm. The enzyme catalyses Hydrolysis of proteins in presence of ATP.. Functionally, ATP-dependent serine protease that mediates the selective degradation of mutant and abnormal proteins as well as certain short-lived regulatory proteins. Required for cellular homeostasis and for survival from DNA damage and developmental changes induced by stress. Degrades polypeptides processively to yield small peptide fragments that are 5 to 10 amino acids long. Binds to DNA in a double-stranded, site-specific manner. The chain is Lon protease from Mesomycoplasma hyopneumoniae (strain 232) (Mycoplasma hyopneumoniae).